A 712-amino-acid chain; its full sequence is Elongation factor G (712 aa).

Residues 8-290 (TRYRNIGISA…AVIEFLPSPT (283 aa)) enclose the tr-type G domain. Residues 17–24 (AHIDAGKT), 88–92 (DTPGH), and 142–145 (NKMD) each bind GTP.

The protein belongs to the TRAFAC class translation factor GTPase superfamily. Classic translation factor GTPase family. EF-G/EF-2 subfamily.

It is found in the cytoplasm. In terms of biological role, catalyzes the GTP-dependent ribosomal translocation step during translation elongation. During this step, the ribosome changes from the pre-translocational (PRE) to the post-translocational (POST) state as the newly formed A-site-bound peptidyl-tRNA and P-site-bound deacylated tRNA move to the P and E sites, respectively. Catalyzes the coordinated movement of the two tRNA molecules, the mRNA and conformational changes in the ribosome. The protein is Elongation factor G of Acinetobacter baumannii (strain AB0057).